The sequence spans 350 residues: C4-dicarboxylate-binding protein DctB (350 aa).

A signal peptide spans Met-1 to Ala-18.

Belongs to the bacterial solute-binding protein 7 family.

The protein localises to the secreted. In terms of biological role, part of the binding-protein-dependent transport system for uptake of C4-dicarboxylates. Responsible for growth on fumarate and succinate but not malate. Is not directly involved in C4-dicarboxylate uptake, but plays a sensory role in the DctS/DctR two-component system which regulates the expression of the dctA C4-dicarboxylate transporter. This Bacillus subtilis (strain 168) protein is C4-dicarboxylate-binding protein DctB (dctB).